The sequence spans 153 residues: MAVKIRLKRLGKIRAPHYRIVVADSRTKRDGRVIEEIGLYHPTEEPSRIEVDSDRAQYWLGVGSQPTEQVLVLLKLTGDWGTFKGDKNAVSTVKVAGAKEAFVADEKKKPVLKPKAAKPAEAEAVIEAEEAAEVEVVAEAGDIADEAADGEKA.

The protein belongs to the bacterial ribosomal protein bS16 family.

This Leifsonia xyli subsp. xyli (strain CTCB07) protein is Small ribosomal subunit protein bS16.